The following is a 302-amino-acid chain: Protease HtpX homolog (302 aa).

Residues 27-47 form a helical membrane-spanning segment; sequence LLMAIGGIIGGTAGMLIALII. Zn(2+) is bound at residue H141. The active site involves E142. Residue H145 participates in Zn(2+) binding. A run of 2 helical transmembrane segments spans residues 151 to 171 and 195 to 215; these read VLVA…ANMA and IGAI…QLAI. E220 serves as a coordination point for Zn(2+).

It belongs to the peptidase M48B family. Zn(2+) serves as cofactor.

It localises to the cell inner membrane. This chain is Protease HtpX homolog, found in Aquifex aeolicus (strain VF5).